Consider the following 300-residue polypeptide: MSQDPILTSKGSQEEEEDFFGLDNFFPEPESPLPPPFSFASYDIPANIDFYVPDHRKSLILRLVGSHPLWGHHLWNTARTLSTYLLETPQITQSRHVLELGAGAGLPSIVCVLAGSSKVIVTDYSDEGLLDNLRFNVDVNLEGEEKERIAVDGHVWGQSVDPLLGHLPKGQKYDLLILSDLVFNHSQHDALIKTVEATLTSSSTQSYDPSNPSAPLTEPSILVFFTHHRPHLAHADMAFFPRLAESGNGWAYEKVVEEWAGAMFENDPGDKKVRGTVHGWRAWRVRDGEERGEKPSRISL.

S-adenosyl-L-methionine is bound by residues tryptophan 75, 101–103 (GAG), aspartate 123, tryptophan 156, and serine 179.

It belongs to the class I-like SAM-binding methyltransferase superfamily. EFM7 family.

It localises to the cytoplasm. Functionally, S-adenosyl-L-methionine-dependent protein methyltransferase that trimethylates the N-terminal glycine 'Gly-2' of elongation factor 1-alpha, before also catalyzing the mono- and dimethylation of 'Lys-3'. The sequence is that of Protein N-terminal and lysine N-methyltransferase EFM7 from Cryptococcus neoformans var. neoformans serotype D (strain JEC21 / ATCC MYA-565) (Filobasidiella neoformans).